The primary structure comprises 168 residues: Peptidyl-prolyl cis-trans isomerase-like 3 (168 aa).

Residues 1–156 enclose the PPIase cyclophilin-type domain; the sequence is MSVTLHTNVG…SEIRMTGVTV (156 aa).

It belongs to the cyclophilin-type PPIase family. PPIL3 subfamily.

It catalyses the reaction [protein]-peptidylproline (omega=180) = [protein]-peptidylproline (omega=0). In terms of biological role, PPIases accelerate the folding of proteins. It catalyzes the cis-trans isomerization of proline imidic peptide bonds in oligopeptides. The chain is Peptidyl-prolyl cis-trans isomerase-like 3 (CYP10) from Mycosarcoma maydis (Corn smut fungus).